We begin with the raw amino-acid sequence, 238 residues long: Ribonuclease PH (238 aa).

Residues arginine 86 and 124 to 126 each bind phosphate; that span reads GTR.

This sequence belongs to the RNase PH family. In terms of assembly, homohexameric ring arranged as a trimer of dimers.

The catalysed reaction is tRNA(n+1) + phosphate = tRNA(n) + a ribonucleoside 5'-diphosphate. Phosphorolytic 3'-5' exoribonuclease that plays an important role in tRNA 3'-end maturation. Removes nucleotide residues following the 3'-CCA terminus of tRNAs; can also add nucleotides to the ends of RNA molecules by using nucleoside diphosphates as substrates, but this may not be physiologically important. Probably plays a role in initiation of 16S rRNA degradation (leading to ribosome degradation) during starvation. The protein is Ribonuclease PH of Citrobacter koseri (strain ATCC BAA-895 / CDC 4225-83 / SGSC4696).